The following is a 63-amino-acid chain: Laccase-C1 (63 aa).

Belongs to the multicopper oxidase family. Monomer. The cofactor is Cu cation. Glycosylated; contains 16% carbohydrates.

The protein resides in the secreted. It carries out the reaction 4 hydroquinone + O2 = 4 benzosemiquinone + 2 H2O. Its activity is regulated as follows. Inhibited by sodium azide. Lignin degradation and detoxification of lignin-derived products. Oxidation of a broad range of substrates including mono-, di- and polyphenols, aromatic amines and methoxy-substituted phenols accompanied by reduction of oxygen to water. This Cerrena unicolor (Canker rot fungus) protein is Laccase-C1.